A 172-amino-acid chain; its full sequence is Protein-export protein SecB (172 aa).

The protein belongs to the SecB family. In terms of assembly, homotetramer, a dimer of dimers. One homotetramer interacts with 1 SecA dimer.

The protein localises to the cytoplasm. Functionally, one of the proteins required for the normal export of preproteins out of the cell cytoplasm. It is a molecular chaperone that binds to a subset of precursor proteins, maintaining them in a translocation-competent state. It also specifically binds to its receptor SecA. In Haemophilus ducreyi (strain 35000HP / ATCC 700724), this protein is Protein-export protein SecB.